The chain runs to 746 residues: Mediator of RNA polymerase II transcription subunit 25 (746 aa).

Residues 1–226 (MVPGSEGPAR…PRHMVLVRGL (226 aa)) form an interaction with the Mediator complex region. Disordered stretches follow at residues 233 to 273 (GSAP…QQYQ) and 298 to 390 (GLGP…PALG). Residues 238–251 (PLQPKQPVPLPPAA) show a composition bias toward pro residues. The span at 252 to 262 (PAGATLSTAPQ) shows a compositional bias: low complexity. Over residues 329–342 (PPGPPGAPKPPPAS) the composition is skewed to pro residues. Residues 343-354 (QPSLVSTVAPGP) show a composition bias toward low complexity. The interaction with VP16 stretch occupies residues 389–543 (LGGQQSVSNK…VNGIRQVITN (155 aa)). An interaction with CREBBP region spans residues 395–545 (VSNKLLAWSG…GIRQVITNHK (151 aa)). Residues 548–746 (QQQKLEQQRG…MEDDILMDLI (199 aa)) form a disordered region. 2 interaction with RARA regions span residues 563 to 652 (APPG…LLNP) and 639 to 706 (PGAN…WPAQ). Over residues 599-610 (AAAGQPQPQGAA) the composition is skewed to low complexity. Residues 611–633 (PAPPGAPQGPPGAAPGPPPPGPL) are compositionally biased toward pro residues. The LXXLL motif signature appears at 645-649 (LRSLL). Pro residues-rich tracts occupy residues 651-663 (NPPPPQTGVPPPQ), 672-682 (PGAPALLPPPH), and 690-701 (LGPPLLHPPPAQ). Arg724 carries the asymmetric dimethylarginine modification. Acidic residues predominate over residues 737–746 (MEDDILMDLI).

Belongs to the Mediator complex subunit 25 family. As to quaternary structure, component of the Mediator complex, which is composed of MED1, MED4, MED6, MED7, MED8, MED9, MED10, MED11, MED12, MED13, MED13L, MED14, MED15, MED16, MED17, MED18, MED19, MED20, MED21, MED22, MED23, MED24, MED25, MED26, MED27, MED29, MED30, MED31, CCNC, CDK8 and CDC2L6/CDK11. The MED12, MED13, CCNC and CDK8 subunits form a distinct module termed the CDK8 module. Mediator containing the CDK8 module is less active than Mediator lacking this module in supporting transcriptional activation. Individual preparations of the Mediator complex lacking one or more distinct subunits have been variously termed ARC, CRSP, DRIP, PC2, SMCC and TRAP. Interacts with CREBBP. Interacts with ESR1, GR, RARA, RXRA and THRB in a ligand-dependent fashion. Binds the Herpes simplex virus activator VP16.

Its subcellular location is the nucleus. In terms of biological role, component of the Mediator complex, a coactivator involved in the regulated transcription of nearly all RNA polymerase II-dependent genes. Mediator functions as a bridge to convey information from gene-specific regulatory proteins to the basal RNA polymerase II transcription machinery. Mediator is recruited to promoters by direct interactions with regulatory proteins and serves as a scaffold for the assembly of a functional preinitiation complex with RNA polymerase II and the general transcription factors. Required for RARA/RXRA-mediated transcription. This chain is Mediator of RNA polymerase II transcription subunit 25 (MED25), found in Bos taurus (Bovine).